A 1941-amino-acid polypeptide reads, in one-letter code: Myosin-2 (1941 aa).

The 50-residue stretch at 33-82 (DAKTSVFVAEPKESFVKGTIQSREGGKVTVKTEGGATLTVKDDQVFPMNP) folds into the Myosin N-terminal SH3-like domain. A phosphothreonine mark is found at T64 and T69. One can recognise a Myosin motor domain in the interval 86 to 784 (DKIEDMAMMT…LLGLLEEMRD (699 aa)). K130 carries the N6,N6,N6-trimethyllysine modification. Position 179-186 (179-186 (GESGAGKT)) interacts with ATP. Position 389 is a phosphotyrosine (Y389). S392 carries the post-translational modification Phosphoserine. Phosphothreonine is present on T419. Residue S625 is modified to Phosphoserine. Residues 661–683 (LNKLMTNLRSTHPHFVRCIIPNE) are actin-binding. Pros-methylhistidine is present on H759. The interval 763-777 (KFGHTKVFFKAGLLG) is actin-binding. An IQ domain is found at 787–816 (LAQLITRTQARCRGFLARVEYQRMVERREA). Residues 845–1941 (LLKSAETEKE…EVHTKVISEE (1097 aa)) adopt a coiled-coil conformation. A phosphoserine mark is found at S1094 and S1098. Disordered regions lie at residues 1128 to 1149 (IEAERASRAKAEKQRSDLSREL) and 1155 to 1174 (RLEEAGGATSAQIEMNKKRE). Residues 1130–1149 (AERASRAKAEKQRSDLSREL) are compositionally biased toward basic and acidic residues. 2 positions are modified to phosphoserine: S1164 and S1239. The residue at position 1243 (T1243) is a Phosphothreonine. Position 1245 is a phosphoserine (S1245). T1257 carries the phosphothreonine modification. Position 1263 is a phosphoserine (S1263). T1288 is subject to Phosphothreonine. S1290, S1294, S1305, and S1308 each carry phosphoserine. Phosphothreonine is present on T1469. The residue at position 1476 (S1476) is a Phosphoserine. At Y1494 the chain carries Phosphotyrosine. S1497 is modified (phosphoserine). Position 1503 is a phosphothreonine (T1503). S1516 carries the phosphoserine modification. Residue T1519 is modified to Phosphothreonine. 6 positions are modified to phosphoserine: S1556, S1576, S1602, S1605, S1716, and S1728. Phosphothreonine occurs at positions 1732 and 1738. A Phosphoserine modification is found at S1741.

Belongs to the TRAFAC class myosin-kinesin ATPase superfamily. Myosin family. In terms of assembly, muscle myosin is a hexameric protein that consists of 2 heavy chain subunits (MHC), 2 alkali light chain subunits (MLC) and 2 regulatory light chain subunits (MLC-2). Interacts with GCSAM.

It is found in the cytoplasm. The protein localises to the myofibril. Functionally, myosins are actin-based motor molecules with ATPase activity essential for muscle contraction. The polypeptide is Myosin-2 (Homo sapiens (Human)).